Here is a 121-residue protein sequence, read N- to C-terminus: Small ribosomal subunit protein uS13 (121 aa).

Residues 97 to 121 form a disordered region; sequence PVRGQKTHSNARTRKGPRASRIKKK. Over residues 101 to 121 the composition is skewed to basic residues; the sequence is QKTHSNARTRKGPRASRIKKK.

The protein belongs to the universal ribosomal protein uS13 family. As to quaternary structure, part of the 30S ribosomal subunit. Forms a loose heterodimer with protein S19. Forms two bridges to the 50S subunit in the 70S ribosome.

Functionally, located at the top of the head of the 30S subunit, it contacts several helices of the 16S rRNA. In the 70S ribosome it contacts the 23S rRNA (bridge B1a) and protein L5 of the 50S subunit (bridge B1b), connecting the 2 subunits; these bridges are implicated in subunit movement. Contacts the tRNAs in the A and P-sites. The protein is Small ribosomal subunit protein uS13 of Kosmotoga olearia (strain ATCC BAA-1733 / DSM 21960 / TBF 19.5.1).